We begin with the raw amino-acid sequence, 268 residues long: MQLLAFVDPVAIQIGPLSIRWYGIIIVSAIALSIWLGGRFARDRGLDPAFVDSFAIILVPAGILGARLYEVFVLQWPYYSQHPDKILQIWEGGLAIHGAVLGGAIAAAIYLPMRKQPFWRWADVVGLVLPLAQAIGRWGNFFNQEAYGDPAPDWLVRLMPGWLREGMTISGTVMHPTFLYESVWNLLTFGILLVCHRRRMKTGVVFSLYLVLYNAGRFLIESIRQDSSFIFGRIRVAQLVAAVLAILGLVLLAWFLRRPAESGDSAGV.

7 consecutive transmembrane segments (helical) span residues 21 to 41 (WYGIIIVSAIALSIWLGGRFA), 54 to 74 (FAIILVPAGILGARLYEVFVL), 93 to 113 (GLAIHGAVLGGAIAAAIYLPM), 122 to 142 (ADVVGLVLPLAQAIGRWGNFF), 173 to 193 (VMHPTFLYESVWNLLTFGILL), 203 to 223 (GVVFSLYLVLYNAGRFLIESI), and 236 to 256 (VAQLVAAVLAILGLVLLAWFL). An a 1,2-diacyl-sn-glycero-3-phospho-(1'-sn-glycerol)-binding site is contributed by R137.

Belongs to the Lgt family.

It is found in the cell membrane. It carries out the reaction L-cysteinyl-[prolipoprotein] + a 1,2-diacyl-sn-glycero-3-phospho-(1'-sn-glycerol) = an S-1,2-diacyl-sn-glyceryl-L-cysteinyl-[prolipoprotein] + sn-glycerol 1-phosphate + H(+). It functions in the pathway protein modification; lipoprotein biosynthesis (diacylglyceryl transfer). In terms of biological role, catalyzes the transfer of the diacylglyceryl group from phosphatidylglycerol to the sulfhydryl group of the N-terminal cysteine of a prolipoprotein, the first step in the formation of mature lipoproteins. This chain is Phosphatidylglycerol--prolipoprotein diacylglyceryl transferase, found in Symbiobacterium thermophilum (strain DSM 24528 / JCM 14929 / IAM 14863 / T).